The chain runs to 427 residues: Dihydroorotase (427 aa).

2 residues coordinate Zn(2+): H60 and H62. Substrate contacts are provided by residues 62-64 (HFR) and N94. Positions 152, 179, and 232 each coordinate Zn(2+). N278 contributes to the substrate binding site. D305 serves as a coordination point for Zn(2+). The active site involves D305. Residues H309 and 323-324 (FG) each bind substrate.

Belongs to the metallo-dependent hydrolases superfamily. DHOase family. Class I DHOase subfamily. Zn(2+) is required as a cofactor.

The catalysed reaction is (S)-dihydroorotate + H2O = N-carbamoyl-L-aspartate + H(+). It participates in pyrimidine metabolism; UMP biosynthesis via de novo pathway; (S)-dihydroorotate from bicarbonate: step 3/3. Its function is as follows. Catalyzes the reversible cyclization of carbamoyl aspartate to dihydroorotate. The protein is Dihydroorotase of Enterococcus faecalis (strain ATCC 700802 / V583).